Consider the following 127-residue polypeptide: Aspartate 1-decarboxylase (127 aa).

Serine 25 serves as the catalytic Schiff-base intermediate with substrate; via pyruvic acid. At serine 25 the chain carries Pyruvic acid (Ser). Substrate is bound at residue threonine 57. Residue tyrosine 58 is the Proton donor of the active site. 73–75 serves as a coordination point for substrate; sequence GSA.

Belongs to the PanD family. As to quaternary structure, heterooctamer of four alpha and four beta subunits. The cofactor is pyruvate. Post-translationally, is synthesized initially as an inactive proenzyme, which is activated by self-cleavage at a specific serine bond to produce a beta-subunit with a hydroxyl group at its C-terminus and an alpha-subunit with a pyruvoyl group at its N-terminus.

The protein localises to the cytoplasm. The enzyme catalyses L-aspartate + H(+) = beta-alanine + CO2. Its pathway is cofactor biosynthesis; (R)-pantothenate biosynthesis; beta-alanine from L-aspartate: step 1/1. Its function is as follows. Catalyzes the pyruvoyl-dependent decarboxylation of aspartate to produce beta-alanine. In Polaromonas naphthalenivorans (strain CJ2), this protein is Aspartate 1-decarboxylase.